A 495-amino-acid chain; its full sequence is MVSEITHKSYPLHFVLFPFMAQGHMIPMVDIARLLAQRGVKITIVTTPHNAARFENVLSRAIESGLPISIVQVKLPSQEAGLPEGNETFDSLVSTKLLVPFFKAVNMLEEPVQKLFEEMSPQPSCIISDFCLPYTSKIAKKFNIPKILFHGMCCFCLLCMHVLRKNREILENLKSDKEHFVVPYFPDRVEFTRPQVPLATYVPGEWHEIKEDMVEADKTSYGVIVNTYQELEPAYANGYKEARSGKAWTIGPVSLCNKVGADKAERGNKADIDQDECLKWLDSKEEGSVLYVCLGSICSLPLSQLKELGLGLEESQRPFIWVVRGWEKNKELLEWFSESGFEERVKDRGLLIKGWSPQMLILAHHSVGGFLTHCGWNSTLEGITSGVPLLTWPLFGDQFCNQKLVVQVLKVGVSAGVEEVTNWGEEEKIGVLVDKEGVKKAVEELMGESDDAKEIRKRVKELGQLAHKAVEEGGSSHSNITSLLEDIMQLAQPNN.

The Proton acceptor role is filled by His-24. His-24 is a binding site for an anthocyanidin. Asp-129 functions as the Charge relay in the catalytic mechanism. Residues Gln-358, His-373, Trp-376, Asn-377, Ser-378, and Glu-381 each coordinate UDP-alpha-D-glucose. Residue Gly-396 participates in an anthocyanidin binding. Residues Asp-397 and Gln-398 each contribute to the UDP-alpha-D-glucose site.

This sequence belongs to the UDP-glycosyltransferase family.

The catalysed reaction is oleanolate + UDP-alpha-D-glucose = oleanolate 3-O-beta-D-glucoside + UDP + H(+). In terms of biological role, catalyzes the transfer of a glucose (Glc) moiety from UDP-Glc to the C-3 position of the oleanane sapogenins oleanolate and hederagenin, and to the C-28 carboxylic group of the lupane sapogenin betulinate. The monoglucosylated hederagenin 3-O-beta-D-glucoside is a feeding deterrent of the yellow-striped flea beetle (Phyllotreta nemorum). This Barbarea vulgaris (Yellow rocket) protein is UDP-glycosyltransferase 73C10.